The sequence spans 161 residues: Lectin-like protein EP153R (161 aa).

Residues 1–30 (MFSNKKYIGLIDKYCEKKILDDSSTIKICY) lie on the Cytoplasmic side of the membrane. The chain crosses the membrane as a helical span at residues 31–51 (ILIGILIGTNMITLIYNFIFW). Topologically, residues 52-161 (ENYITCNQKD…HVSLLYICSK (110 aa)) are extracellular. A disulfide bond links cysteine 66 and cysteine 77. The tract at residues 66-160 (CPKDWVGYNN…KHVSLLYICS (95 aa)) is lectin-like. N-linked (GlcNAc...) asparagine; by host glycans are attached at residues asparagine 89, asparagine 98, asparagine 104, asparagine 110, asparagine 116, asparagine 130, and asparagine 136. Cysteines 94 and 159 form a disulfide.

This sequence belongs to the asfivirus lectin-like protein family. Homodimer.

Its subcellular location is the host endoplasmic reticulum membrane. In terms of biological role, down-regulates MHC-I expression by impairing the appropriate configuration or presentation into the plasma membrane of the latter. Participates in viral hemadsorption, which may help viral spread. Reduces the transactivating activity of host TP53, thus inhibiting apoptosis. Non-essential for virus growth in swine macrophage cell cultures. The protein is Lectin-like protein EP153R of African swine fever virus (isolate Tick/Malawi/Lil 20-1/1983) (ASFV).